The primary structure comprises 605 residues: Elongation factor 4 (605 aa).

In terms of domain architecture, tr-type G spans 9–192 (SRIRNFCIIA…AIIARVPAPA (184 aa)). GTP contacts are provided by residues 21-26 (DHGKST) and 139-142 (NKID).

The protein belongs to the TRAFAC class translation factor GTPase superfamily. Classic translation factor GTPase family. LepA subfamily.

Its subcellular location is the cell inner membrane. It carries out the reaction GTP + H2O = GDP + phosphate + H(+). In terms of biological role, required for accurate and efficient protein synthesis under certain stress conditions. May act as a fidelity factor of the translation reaction, by catalyzing a one-codon backward translocation of tRNAs on improperly translocated ribosomes. Back-translocation proceeds from a post-translocation (POST) complex to a pre-translocation (PRE) complex, thus giving elongation factor G a second chance to translocate the tRNAs correctly. Binds to ribosomes in a GTP-dependent manner. The polypeptide is Elongation factor 4 (Chlorobium luteolum (strain DSM 273 / BCRC 81028 / 2530) (Pelodictyon luteolum)).